The sequence spans 1681 residues: Meiosis regulator and mRNA stability factor 1 (1681 aa).

Residues 340-477 (IGVFWDIENC…ALLHHAHELI (138 aa)) enclose the NYN domain. Disordered regions lie at residues 576-595 (VNET…PKKV) and 638-717 (QMQS…DVVF). A compositionally biased stretch (polar residues) spans 638 to 647 (QMQSKSNKTS). Positions 648-658 (QQEKDKKRNGD) are enriched in basic and acidic residues. The segment covering 659–690 (KQGTLSQSSPLCTNQMLQTARNVGTDNTASKS) has biased composition (polar residues). A compositionally biased stretch (basic and acidic residues) spans 692–715 (QKRDDTTRKSNADSQKEQKNKEDV). Positions 779–858 (ADIQIGNLDY…KRIQVSLATG (80 aa)) constitute an RRM domain. HTH OST-type domains follow at residues 863-937 (SLSL…SPMG), 991-1067 (SLKT…HNKP), 1087-1161 (QLIQ…LTHR), 1163-1238 (QVKR…IPKR), 1247-1321 (RTKQ…LTEM), 1323-1398 (RIKA…INRK), 1399-1472 (SLRS…SVQL), and 1474-1548 (SLYV…LKND). Residues 1637 to 1648 (EPSTQNICPQES) are compositionally biased toward polar residues. Residues 1637–1662 (EPSTQNICPQESKSTKELPESPVKRQ) form a disordered region. A compositionally biased stretch (basic and acidic residues) spans 1649 to 1659 (KSTKELPESPV).

The protein resides in the peroxisome. Its function is as follows. Essential regulator of oogenesis required for female meiotic progression to repress transposable elements and preventing their mobilization, which is essential for the germline integrity. The chain is Meiosis regulator and mRNA stability factor 1 from Xenopus tropicalis (Western clawed frog).